The chain runs to 367 residues: MERKKKKVIVGLSGGVDSSVAACMLVREGYEVLGLHLKVLQEGDGSTVLEPSPMTISSREEFHIPVFTLNLAARFRNEVMDYFKEEYLAARTPNPCMVCNKTIKWRGLLEGAAQLGADMVATGHYARTAFIDGRHRLFAGLDRKKDQSYFLWMLAQEELSRTILPLGGLTKPEVRDLARSFGLTAAEKKESQEICFVPDDDYGSYLESAVPGLHRRVEGGEILDPSGQVIGHHKGYPFYTIGQRRGLGTATGEPLYVTAIDPIGNLVHTGPKSALFSTSVEVSHLNWIGIDPPFAPMEATAKIRYRDHASPCTIIPLGPGPTGVTARIMFKEPKSALTPGQAAVFYRGEEVLGGGIIEGALPMEPHP.

ATP contacts are provided by residues 11–18 and Leu37; that span reads GLSGGVDS. Cys99 (nucleophile) is an active-site residue. A disulfide bond links Cys99 and Cys195. Gly123 contacts ATP. The interval 145–147 is interaction with tRNA; it reads KDQ. The active-site Cysteine persulfide intermediate is the Cys195. The tract at residues 304 to 305 is interaction with tRNA; the sequence is RY.

This sequence belongs to the MnmA/TRMU family.

It localises to the cytoplasm. It catalyses the reaction S-sulfanyl-L-cysteinyl-[protein] + uridine(34) in tRNA + AH2 + ATP = 2-thiouridine(34) in tRNA + L-cysteinyl-[protein] + A + AMP + diphosphate + H(+). Functionally, catalyzes the 2-thiolation of uridine at the wobble position (U34) of tRNA, leading to the formation of s(2)U34. The polypeptide is tRNA-specific 2-thiouridylase MnmA (Chlorobium luteolum (strain DSM 273 / BCRC 81028 / 2530) (Pelodictyon luteolum)).